The chain runs to 475 residues: Ankyrin repeat, SAM and basic leucine zipper domain-containing protein 1 (475 aa).

The segment at 1-25 is disordered; that stretch reads MAAGALRGLPVAGGGESSESEDDGW. Phosphoserine occurs at positions 17, 18, and 20. 6 ANK repeats span residues 45 to 74, 78 to 107, 110 to 144, 148 to 177, 181 to 210, and 214 to 243; these read EKKE…SVDS, YGWT…NASF, DKQS…DPNV, RLMT…EVNT, NGYT…NKML, and DGKM…PLEG. Positions 272 to 334 constitute an SAM domain; it reads SYTAFGDLEV…KILAALKELQ (63 aa).

Interacts with DDX4, PIWIL1, RANBP9 and TDRD1.

It is found in the cytoplasm. Functionally, plays a central role during spermatogenesis by repressing transposable elements and preventing their mobilization, which is essential for the germline integrity. Acts via the piRNA metabolic process, which mediates the repression of transposable elements during meiosis by forming complexes composed of piRNAs and Piwi proteins and governs the methylation and subsequent repression of transposons. Its association with pi-bodies suggests a participation in the primary piRNAs metabolic process. Required prior to the pachytene stage to facilitate the production of multiple types of piRNAs, including those associated with repeats involved in the regulation of retrotransposons. May act by mediating protein-protein interactions during germ cell maturation. This chain is Ankyrin repeat, SAM and basic leucine zipper domain-containing protein 1 (ASZ1), found in Nomascus leucogenys (Northern white-cheeked gibbon).